The chain runs to 152 residues: MNNNNNFNSNFNSNRISSTQPYLSDDARNALFEGKDRKWGNNNNNNYDTLSNQDVFEKQKRDMEEQDKMLDALSGSISRVKDTAITINKTAQEQTDMLDELDVHVDSTSARMRNTTKNLITLTQQSKTTGYCSAICFLLLVLLVIIILASVL.

The span at 1-14 shows a compositional bias: low complexity; sequence MNNNNNFNSNFNSN. Positions 1–22 are disordered; sequence MNNNNNFNSNFNSNRISSTQPY. The Cytoplasmic portion of the chain corresponds to 1 to 131; it reads MNNNNNFNSN…LTQQSKTTGY (131 aa). A t-SNARE coiled-coil homology domain is found at 60 to 122; it reads KRDMEEQDKM…RNTTKNLITL (63 aa). Residues 132 to 152 traverse the membrane as a helical; Anchor for type IV membrane protein segment; sequence CSAICFLLLVLLVIIILASVL.

It belongs to the syntaxin family. In terms of assembly, component of the SNARE complex composed of syn7A, syn8A, vamp7A and vti1A.

Its subcellular location is the endosome membrane. Its function is as follows. Involved in the targeting and/or fusion of transport vesicles to their target membrane during transport of proteins from the early endosome to the lysosome. Required for fusion of late endosomes with lysosomes and homotypic lysosomal fusion. This is Syntaxin-8A from Dictyostelium discoideum (Social amoeba).